A 253-amino-acid chain; its full sequence is Probable transcriptional regulatory protein Krad_3057 (253 aa).

It belongs to the TACO1 family.

Its subcellular location is the cytoplasm. In Kineococcus radiotolerans (strain ATCC BAA-149 / DSM 14245 / SRS30216), this protein is Probable transcriptional regulatory protein Krad_3057.